Here is a 272-residue protein sequence, read N- to C-terminus: Indole-3-glycerol phosphate synthase (272 aa).

This sequence belongs to the TrpC family.

The enzyme catalyses 1-(2-carboxyphenylamino)-1-deoxy-D-ribulose 5-phosphate + H(+) = (1S,2R)-1-C-(indol-3-yl)glycerol 3-phosphate + CO2 + H2O. Its pathway is amino-acid biosynthesis; L-tryptophan biosynthesis; L-tryptophan from chorismate: step 4/5. The polypeptide is Indole-3-glycerol phosphate synthase (Mycolicibacterium gilvum (strain PYR-GCK) (Mycobacterium gilvum (strain PYR-GCK))).